Reading from the N-terminus, the 97-residue chain is Putative membrane protein insertion efficiency factor (97 aa).

The interval 72–97 (VPGAEPDQEQHQCTPLCNHHSEDHSQ) is disordered.

It belongs to the UPF0161 family.

The protein localises to the cell inner membrane. In terms of biological role, could be involved in insertion of integral membrane proteins into the membrane. In Alcanivorax borkumensis (strain ATCC 700651 / DSM 11573 / NCIMB 13689 / SK2), this protein is Putative membrane protein insertion efficiency factor.